Here is an 829-residue protein sequence, read N- to C-terminus: Probable methyltransferase PMT26 (829 aa).

Topologically, residues 1 to 17 (MAQPRYTRIDNRRPSSN) are cytoplasmic. The helical; Signal-anchor for type II membrane protein transmembrane segment at 18–38 (YCSTVTVVVFVALCLVGIWMM) threads the bilayer. Residues 39 to 829 (TSSSVGPAQN…EVETLTYAIG (791 aa)) lie on the Lumenal side of the membrane. The interval 55 to 258 (DNKDGIKKQM…TSGDLSPPGA (204 aa)) is disordered. Basic and acidic residues-rich tracts occupy residues 85–143 (NEDK…DSKS), 151–160 (LDEKKDLKDN), 168–177 (TNEKQTKPET), and 187–231 (ENQK…KENT). 4 N-linked (GlcNAc...) asparagine glycosylation sites follow: N215, N247, N264, and N270. The segment covering 241–252 (QEGQSKNETSGD) has biased composition (polar residues). Residues 271–291 (GSFSTQATESKNEKEAQKGSG) form a disordered region. A compositionally biased stretch (basic and acidic residues) spans 280-291 (SKNEKEAQKGSG). N-linked (GlcNAc...) asparagine glycosylation is found at N302, N579, N595, and N756.

This sequence belongs to the methyltransferase superfamily.

It localises to the golgi apparatus membrane. This is Probable methyltransferase PMT26 from Arabidopsis thaliana (Mouse-ear cress).